Consider the following 877-residue polypeptide: Protein P (877 aa).

The terminal protein domain (TP) stretch occupies residues 1–183 (MHPFSQLFRN…GKPYSWGHRQ (183 aa)). A spacer region spans residues 184–382 (LEQHNGQQHE…YCLHHIVSSL (199 aa)). Basic and acidic residues predominate over residues 185-198 (EQHNGQQHESHLQS). The tract at residues 185–347 (EQHNGQQHES…PSSSGLCGGT (163 aa)) is disordered. Polar residues predominate over residues 233 to 242 (FGESQKSART). Low complexity predominate over residues 267–281 (QQGSSQVSSPRSKSS). 2 stretches are compositionally biased toward polar residues: residues 282-302 (NFRN…PTWY) and 338-347 (PSSSGLCGGT). Residues 383–723 (EDWGPCTISG…YAELWPVARQ (341 aa)) are polymerase/reverse transcriptase domain (RT). The 242-residue stretch at 393–634 (DVTIRSPRTP…HHLHFMGYVI (242 aa)) folds into the Reverse transcriptase domain. Residues Asp465, Asp585, and Asp586 each coordinate Mg(2+).

It belongs to the hepadnaviridae P protein family.

It catalyses the reaction DNA(n) + a 2'-deoxyribonucleoside 5'-triphosphate = DNA(n+1) + diphosphate. It carries out the reaction Endonucleolytic cleavage to 5'-phosphomonoester.. Its activity is regulated as follows. Activated by host HSP70 and HSP40 in vitro to be able to bind the epsilon loop of the pgRNA. Because deletion of the RNase H region renders the protein partly chaperone-independent, the chaperones may be needed indirectly to relieve occlusion of the RNA-binding site by this domain. Inhibited by several reverse-transcriptase inhibitors: Lamivudine, Adefovir and Entecavir. Functionally, multifunctional enzyme that converts the viral RNA genome into dsDNA in viral cytoplasmic capsids. This enzyme displays a DNA polymerase activity that can copy either DNA or RNA templates, and a ribonuclease H (RNase H) activity that cleaves the RNA strand of RNA-DNA heteroduplexes in a partially processive 3'- to 5'-endonucleasic mode. Neo-synthesized pregenomic RNA (pgRNA) are encapsidated together with the P protein, and reverse-transcribed inside the nucleocapsid. Initiation of reverse-transcription occurs first by binding the epsilon loop on the pgRNA genome, and is initiated by protein priming, thereby the 5'-end of (-)DNA is covalently linked to P protein. Partial (+)DNA is synthesized from the (-)DNA template and generates the relaxed circular DNA (RC-DNA) genome. After budding and infection, the RC-DNA migrates in the nucleus, and is converted into a plasmid-like covalently closed circular DNA (cccDNA). The activity of P protein does not seem to be necessary for cccDNA generation, and is presumably released from (+)DNA by host nuclear DNA repair machinery. The chain is Protein P from Arctic squirrel hepatitis virus (ASHV).